The chain runs to 497 residues: 3-ketoacyl-CoA synthase 6 (497 aa).

Helical transmembrane passes span 25 to 45 (LVNH…AVEL) and 64 to 84 (LVQV…YFMS). The 290-residue stretch at 81-370 (YFMSKPRTIY…FLTSLIGRKI (290 aa)) folds into the FAE domain. Active-site residues include C225, H304, H388, H392, H421, and N425.

It belongs to the thiolase-like superfamily. Chalcone/stilbene synthases family. In terms of tissue distribution, in epidermal cells of aerial tissues and in the tapetum of anthers near maturity. Expressed in siliques, flowers and leaves.

It is found in the endoplasmic reticulum membrane. It carries out the reaction a very-long-chain acyl-CoA + malonyl-CoA + H(+) = a very-long-chain 3-oxoacyl-CoA + CO2 + CoA. It participates in lipid metabolism; fatty acid biosynthesis. With respect to regulation, strongly inhibited by metazachlor and mefluidide. In terms of biological role, contributes to cuticular wax and suberin biosynthesis. Involved in both decarbonylation and acyl-reduction wax synthesis pathways. Required for elongation of C24 fatty acids, an essential step of the cuticular wax production. Major condensing enzyme for stem wax and pollen coat lipid biosynthesis. In Arabidopsis thaliana (Mouse-ear cress), this protein is 3-ketoacyl-CoA synthase 6.